We begin with the raw amino-acid sequence, 304 residues long: Acetyl-coenzyme A carboxylase carboxyl transferase subunit beta (304 aa).

The region spanning 23–292 (VWTKCDSCGQ…PNPEAPREGV (270 aa)) is the CoA carboxyltransferase N-terminal domain. Cysteine 27, cysteine 30, cysteine 46, and cysteine 49 together coordinate Zn(2+). The C4-type zinc-finger motif lies at 27-49 (CDSCGQVLYRAELERNLEVCPKC). Residues 284-304 (NPEAPREGVVVPPVPDQEPEA) form a disordered region. Positions 295 to 304 (PPVPDQEPEA) are enriched in pro residues.

Belongs to the AccD/PCCB family. In terms of assembly, acetyl-CoA carboxylase is a heterohexamer composed of biotin carboxyl carrier protein (AccB), biotin carboxylase (AccC) and two subunits each of ACCase subunit alpha (AccA) and ACCase subunit beta (AccD). It depends on Zn(2+) as a cofactor.

Its subcellular location is the cytoplasm. It carries out the reaction N(6)-carboxybiotinyl-L-lysyl-[protein] + acetyl-CoA = N(6)-biotinyl-L-lysyl-[protein] + malonyl-CoA. The protein operates within lipid metabolism; malonyl-CoA biosynthesis; malonyl-CoA from acetyl-CoA: step 1/1. Functionally, component of the acetyl coenzyme A carboxylase (ACC) complex. Biotin carboxylase (BC) catalyzes the carboxylation of biotin on its carrier protein (BCCP) and then the CO(2) group is transferred by the transcarboxylase to acetyl-CoA to form malonyl-CoA. The sequence is that of Acetyl-coenzyme A carboxylase carboxyl transferase subunit beta from Shigella flexneri serotype 5b (strain 8401).